Consider the following 337-residue polypeptide: Beta-hexosaminidase (337 aa).

Substrate-binding positions include Asp62, Arg70, Arg133, and Lys163–His164. Residue His176 is the Proton donor/acceptor of the active site. The active-site Nucleophile is the Asp248.

It belongs to the glycosyl hydrolase 3 family. NagZ subfamily.

It is found in the cytoplasm. The enzyme catalyses Hydrolysis of terminal non-reducing N-acetyl-D-hexosamine residues in N-acetyl-beta-D-hexosaminides.. It functions in the pathway cell wall biogenesis; peptidoglycan recycling. Plays a role in peptidoglycan recycling by cleaving the terminal beta-1,4-linked N-acetylglucosamine (GlcNAc) from peptide-linked peptidoglycan fragments, giving rise to free GlcNAc, anhydro-N-acetylmuramic acid and anhydro-N-acetylmuramic acid-linked peptides. This is Beta-hexosaminidase from Psychromonas ingrahamii (strain DSM 17664 / CCUG 51855 / 37).